The primary structure comprises 286 residues: Bifunctional protein FolD (286 aa).

Residues 166 to 168 (GAS) and Ile-232 each bind NADP(+).

It belongs to the tetrahydrofolate dehydrogenase/cyclohydrolase family. In terms of assembly, homodimer.

It catalyses the reaction (6R)-5,10-methylene-5,6,7,8-tetrahydrofolate + NADP(+) = (6R)-5,10-methenyltetrahydrofolate + NADPH. The catalysed reaction is (6R)-5,10-methenyltetrahydrofolate + H2O = (6R)-10-formyltetrahydrofolate + H(+). Its pathway is one-carbon metabolism; tetrahydrofolate interconversion. Catalyzes the oxidation of 5,10-methylenetetrahydrofolate to 5,10-methenyltetrahydrofolate and then the hydrolysis of 5,10-methenyltetrahydrofolate to 10-formyltetrahydrofolate. In Marinobacter nauticus (strain ATCC 700491 / DSM 11845 / VT8) (Marinobacter aquaeolei), this protein is Bifunctional protein FolD.